The primary structure comprises 365 residues: Alanine racemase (365 aa).

Lys32 (proton acceptor; specific for D-alanine) is an active-site residue. The residue at position 32 (Lys32) is an N6-(pyridoxal phosphate)lysine. Arg128 is a binding site for substrate. The active-site Proton acceptor; specific for L-alanine is the Tyr257. Residue Met305 participates in substrate binding.

It belongs to the alanine racemase family. The cofactor is pyridoxal 5'-phosphate.

It carries out the reaction L-alanine = D-alanine. The protein operates within amino-acid biosynthesis; D-alanine biosynthesis; D-alanine from L-alanine: step 1/1. Its function is as follows. Catalyzes the interconversion of L-alanine and D-alanine. May also act on other amino acids. This chain is Alanine racemase (alr), found in Francisella philomiragia subsp. philomiragia (strain ATCC 25017 / CCUG 19701 / FSC 153 / O#319-036).